The primary structure comprises 320 residues: Cytochrome f (320 aa).

Residues 1 to 35 (MEKRNTYDWVTRWVIASFSILTISYMITWTSISNA) form the signal peptide. Heme-binding residues include tyrosine 36, cysteine 56, cysteine 59, and histidine 60. The chain crosses the membrane as a helical span at residues 286–306 (IQGLLVFLASVVLAQIFLVLK).

It belongs to the cytochrome f family. As to quaternary structure, the 4 large subunits of the cytochrome b6-f complex are cytochrome b6, subunit IV (17 kDa polypeptide, petD), cytochrome f and the Rieske protein, while the 4 small subunits are PetG, PetL, PetM and PetN. The complex functions as a dimer. Heme is required as a cofactor.

The protein localises to the plastid. It localises to the chloroplast thylakoid membrane. Functionally, component of the cytochrome b6-f complex, which mediates electron transfer between photosystem II (PSII) and photosystem I (PSI), cyclic electron flow around PSI, and state transitions. This Welwitschia mirabilis (Tree tumbo) protein is Cytochrome f.